Here is a 407-residue protein sequence, read N- to C-terminus: Arylacetamide deacetylase-like 4 family member 1 (407 aa).

Residues 1-4 (MLYL) are Cytoplasmic-facing. The helical; Signal-anchor for type II membrane protein transmembrane segment at 5-25 (VGFLLATVCLLVLGVNVWVLI) threads the bilayer. Topologically, residues 26–407 (DHFLTIDVPP…NAVVSYIKDL (382 aa)) are lumenal. The Involved in the stabilization of the negatively charged intermediate by the formation of the oxyanion hole motif lies at 119–121 (HGG). N-linked (GlcNAc...) asparagine glycosylation is present at N168. Residues S193, D347, and H377 contribute to the active site.

This sequence belongs to the 'GDXG' lipolytic enzyme family.

It localises to the membrane. In Mus musculus (Mouse), this protein is Arylacetamide deacetylase-like 4 family member 1.